The primary structure comprises 235 residues: Exotoxin type C (235 aa).

The signal sequence occupies residues 1 to 27 (MKKINIIKIVFIITVILISTISPIIKS). Zn(2+) contacts are provided by histidine 194, histidine 228, and aspartate 230.

It belongs to the staphylococcal/streptococcal toxin family.

Functionally, superantigen that acts as a causative agent of the symptoms associated with scarlet fever. Has been associated with streptococcal toxic shock-like disease and may play a role in the early events of rheumatic fever. Superantigens cross-link major histocompatibility complex (MHC) class II and T-cell receptor (TCR) molecules, resulting in an overstimulation of T-cells associated with a massive release of pyrogenic and inflammatory cytokines. The chain is Exotoxin type C (speC) from Streptococcus pyogenes serotype M1.